A 276-amino-acid polypeptide reads, in one-letter code: Digeranylgeranylglyceryl phosphate synthase (276 aa).

The next 7 helical transmembrane spans lie at 14–34, 40–60, 92–112, 146–166, 202–222, 224–244, and 256–276; these read NCIL…GHFP, LLIF…NDYF, FAVG…LGVI, GAVA…AFLV, VGVL…KASV, VGYY…YLIL, and QKLL…AAIV.

It belongs to the UbiA prenyltransferase family. DGGGP synthase subfamily. The cofactor is Mg(2+).

Its subcellular location is the cell membrane. It catalyses the reaction sn-3-O-(geranylgeranyl)glycerol 1-phosphate + (2E,6E,10E)-geranylgeranyl diphosphate = 2,3-bis-O-(geranylgeranyl)-sn-glycerol 1-phosphate + diphosphate. It functions in the pathway membrane lipid metabolism; glycerophospholipid metabolism. Functionally, prenyltransferase that catalyzes the transfer of the geranylgeranyl moiety of geranylgeranyl diphosphate (GGPP) to the C2 hydroxyl of (S)-3-O-geranylgeranylglyceryl phosphate (GGGP). This reaction is the second ether-bond-formation step in the biosynthesis of archaeal membrane lipids. This is Digeranylgeranylglyceryl phosphate synthase from Thermococcus onnurineus (strain NA1).